The primary structure comprises 370 residues: Ni-sirohydrochlorin a,c-diamide reductive cyclase complex, component CfbD (370 aa).

This sequence belongs to the NifD/NifK/NifE/NifN family. In terms of assembly, homodimer or monomer. The Ni-sirohydrochlorin a,c-diamide reductive cyclase complex is composed of a NifH homolog component CfbC and a NifD homolog component CfbD. [4Fe-4S] cluster serves as cofactor.

It catalyses the reaction Ni-sirohydrochlorin a,c-diamide + 3 AH2 + ATP + H2O = 15,17(3)-seco-F430-17(3)-acid + 3 A + ADP + phosphate. In terms of biological role, involved in the biosynthesis of the unique nickel-containing tetrapyrrole coenzyme F430, the prosthetic group of methyl-coenzyme M reductase (MCR), which plays a key role in methanogenesis and anaerobic methane oxidation. Catalyzes both the six-electron reduction of the tetrahydroporphyrin ring system and the gamma-lactamization of the c-acetamide side chain of Ni-sirohydrochlorin a,c-diamide to yield 15,17(3)-seco-F430-17(3)-acid (seco-F430), the last intermediate in the biosynthesis of the coenzyme F430. This chain is Ni-sirohydrochlorin a,c-diamide reductive cyclase complex, component CfbD, found in Methanosarcina acetivorans (strain ATCC 35395 / DSM 2834 / JCM 12185 / C2A).